Here is a 138-residue protein sequence, read N- to C-terminus: uncharacterized protein (138 aa).

Transmembrane regions (helical) follow at residues 21–43 (TAFILLIVLAGFGYTAYKIAGGA) and 48–65 (SLIAAAIFALFISLYAII).

Its subcellular location is the cell membrane. This is an uncharacterized protein from Archaeoglobus fulgidus (strain ATCC 49558 / DSM 4304 / JCM 9628 / NBRC 100126 / VC-16).